Consider the following 460-residue polypeptide: MTNYAIILAAGKGTRMTSDLPKVLHKVSGLTMLEHVFRSVKAISPEKAVTVIGHKSEKVRAVLADQSAFVHQTEQLGTGHAVMMAETQLEGLEGHTLVIAGDTPLITGESLKSLIDFHVNHKNVATILTATAQDPFGYGRIVRNKDGEVIKIVEQKDANEYEQQLKEINTGTYVFDNKRLFEALKCITTNNAQGEYYLTDVVAIFRANKEKVGAYILRDFNESLGVNDRVALATAETVMRQRITQKHMVNGVTFQNPETVYIESDVEIAPDVLIEGNVTLKGRTHIGSGTVLTNGTYIVDSEIGQGSIITNSMIESSVLAAGVTVGPYAHLRPGTTLGREVHIGNFVEVKGSHIGEKTKAGHLTYIGNAQVGSSVNVGAGTITVNYDGQNKYETVIGDHAFIGSNSTLIAPLEVGDNALTAAGSTISKTVPADSIVIGRSRQVTKEGYAKRLAHHPSRSK.

Residues 1-229 (MTNYAIILAA…FNESLGVNDR (229 aa)) are pyrophosphorylase. UDP-N-acetyl-alpha-D-glucosamine contacts are provided by residues 8–11 (LAAG), K22, Q72, and 77–78 (GT). D102 lines the Mg(2+) pocket. Residues G139, E154, N169, and N227 each coordinate UDP-N-acetyl-alpha-D-glucosamine. N227 lines the Mg(2+) pocket. The linker stretch occupies residues 230–250 (VALATAETVMRQRITQKHMVN). The tract at residues 251 to 460 (GVTFQNPETV…RLAHHPSRSK (210 aa)) is N-acetyltransferase. Residues R332 and K350 each coordinate UDP-N-acetyl-alpha-D-glucosamine. H362 serves as the catalytic Proton acceptor. UDP-N-acetyl-alpha-D-glucosamine is bound by residues Y365 and N376. Acetyl-CoA-binding positions include A379, 385-386 (NY), S404, A422, and R439.

This sequence in the N-terminal section; belongs to the N-acetylglucosamine-1-phosphate uridyltransferase family. It in the C-terminal section; belongs to the transferase hexapeptide repeat family. In terms of assembly, homotrimer. Requires Mg(2+) as cofactor.

Its subcellular location is the cytoplasm. The enzyme catalyses alpha-D-glucosamine 1-phosphate + acetyl-CoA = N-acetyl-alpha-D-glucosamine 1-phosphate + CoA + H(+). The catalysed reaction is N-acetyl-alpha-D-glucosamine 1-phosphate + UTP + H(+) = UDP-N-acetyl-alpha-D-glucosamine + diphosphate. It functions in the pathway nucleotide-sugar biosynthesis; UDP-N-acetyl-alpha-D-glucosamine biosynthesis; N-acetyl-alpha-D-glucosamine 1-phosphate from alpha-D-glucosamine 6-phosphate (route II): step 2/2. Its pathway is nucleotide-sugar biosynthesis; UDP-N-acetyl-alpha-D-glucosamine biosynthesis; UDP-N-acetyl-alpha-D-glucosamine from N-acetyl-alpha-D-glucosamine 1-phosphate: step 1/1. It participates in bacterial outer membrane biogenesis; LPS lipid A biosynthesis. In terms of biological role, catalyzes the last two sequential reactions in the de novo biosynthetic pathway for UDP-N-acetylglucosamine (UDP-GlcNAc). The C-terminal domain catalyzes the transfer of acetyl group from acetyl coenzyme A to glucosamine-1-phosphate (GlcN-1-P) to produce N-acetylglucosamine-1-phosphate (GlcNAc-1-P), which is converted into UDP-GlcNAc by the transfer of uridine 5-monophosphate (from uridine 5-triphosphate), a reaction catalyzed by the N-terminal domain. This Streptococcus pyogenes serotype M12 (strain MGAS9429) protein is Bifunctional protein GlmU.